The primary structure comprises 280 residues: Mesaconyl-C(4)-CoA hydratase (280 aa).

Belongs to the HTD2 family. As to quaternary structure, homodimer.

The enzyme catalyses (3S)-citramalyl-CoA = 3-methylfumaryl-CoA + H2O. Inhibited by 3-methylfumaryl-CoA concentrations above 0.3 mM. Functionally, involved in the glyoxylate assimilation cycle used to regenerate acetyl-CoA and produce pyruvate as universal precursor for biosynthesis. Catalyzes the hydration of 3-methylfumaryl-CoA (mesaconyl-C4-CoA) to (3S)-citramalyl-CoA. The polypeptide is Mesaconyl-C(4)-CoA hydratase (meh) (Chloroflexus aurantiacus (strain ATCC 29366 / DSM 635 / J-10-fl)).